The sequence spans 398 residues: tRNA(Ile)-lysidine synthase (398 aa).

17–22 contributes to the ATP binding site; sequence SGGPDS.

This sequence belongs to the tRNA(Ile)-lysidine synthase family.

It is found in the cytoplasm. The catalysed reaction is cytidine(34) in tRNA(Ile2) + L-lysine + ATP = lysidine(34) in tRNA(Ile2) + AMP + diphosphate + H(+). In terms of biological role, ligates lysine onto the cytidine present at position 34 of the AUA codon-specific tRNA(Ile) that contains the anticodon CAU, in an ATP-dependent manner. Cytidine is converted to lysidine, thus changing the amino acid specificity of the tRNA from methionine to isoleucine. The protein is tRNA(Ile)-lysidine synthase of Mesoplasma florum (strain ATCC 33453 / NBRC 100688 / NCTC 11704 / L1) (Acholeplasma florum).